The primary structure comprises 681 residues: Heat shock 70 kDa protein (681 aa).

Positions 655-665 (NFPGGMPGAGM) are enriched in gly residues. A disordered region spans residues 655 to 681 (NFPGGMPGAGMPGNAPAGSGPTVEEVD). The span at 666–675 (PGNAPAGSGP) shows a compositional bias: low complexity.

This sequence belongs to the heat shock protein 70 family.

This Plasmodium falciparum protein is Heat shock 70 kDa protein.